Reading from the N-terminus, the 379-residue chain is Cytochrome b (379 aa).

The next 4 membrane-spanning stretches (helical) occupy residues 34 to 54, 78 to 99, 114 to 134, and 179 to 199; these read FGSLLGICLITQILTGLLLAM, WLIRNLHANGASFFFICIYFHI, WNTGIILLLTLMATAFVGYVL, and FFALHFLLPFLIAGITLIHLT. Heme b contacts are provided by H84 and H98. 2 residues coordinate heme b: H183 and H197. H202 is an a ubiquinone binding site. 4 helical membrane-spanning segments follow: residues 227-247, 289-309, 321-341, and 348-368; these read LKDILGFTLMLIPLLTLTFFS, LGGVLALAASVLILFLTPLLH, FSQVLFWLLVANLLILTWVGS, and FIAIGQMASFTYFLILLVLFP.

Belongs to the cytochrome b family. As to quaternary structure, the cytochrome bc1 complex contains 11 subunits: 3 respiratory subunits (MT-CYB, CYC1 and UQCRFS1), 2 core proteins (UQCRC1 and UQCRC2) and 6 low-molecular weight proteins (UQCRH/QCR6, UQCRB/QCR7, UQCRQ/QCR8, UQCR10/QCR9, UQCR11/QCR10 and a cleavage product of UQCRFS1). This cytochrome bc1 complex then forms a dimer. Heme b serves as cofactor.

Its subcellular location is the mitochondrion inner membrane. Functionally, component of the ubiquinol-cytochrome c reductase complex (complex III or cytochrome b-c1 complex) that is part of the mitochondrial respiratory chain. The b-c1 complex mediates electron transfer from ubiquinol to cytochrome c. Contributes to the generation of a proton gradient across the mitochondrial membrane that is then used for ATP synthesis. This chain is Cytochrome b (MT-CYB), found in Apteryx australis (Southern brown kiwi).